A 305-amino-acid polypeptide reads, in one-letter code: MGFVPITLSAGQNPLTQFDGKIETHFLEPPAGTAFQIMQIYKPLPKGDKSGAYRGPPPHFHLHQTERFKVIKGRVGIEVNDKVTVLRPKDGVAICPAGNIHRFIIDVDPKHDQDGEDDEEEDDGEIVFMVNATDSGKDFVLDRIFLENWYGVRVDSFKYGTKIDFIQQCATFDGGDHYLPFPATLPEWVPMSWSVAIRTFLGFWVTVIIGRYVGGLLGYQPFYREYTTDWELAVAKMQGTWFYRRNVQTAYRAATSWKELREMVPYSDEGAANMGLADAKVGNGAAVKKAINDRAANNGEDKKNL.

It belongs to the oxidoreductase OpS7 family.

Its pathway is secondary metabolite biosynthesis. Its function is as follows. Oxidoreductase; part of the gene cluster that mediates the biosynthesis of the bibenzoquinone oosporein, a metabolite required for fungal virulence that acts by evading host immunity to facilitate fungal multiplication in insects. The non-reducing polyketide synthase OpS1 produces orsellinic acid by condensing acetyl-CoA with 3 malonyl-CoA units. Orsellinic acid is then hydroxylated to benzenetriol by the hydroxylase OpS4. The intermediate is oxidized either nonenzymatically to 5,5'-dideoxy-oosporein or enzymatically to benzenetetrol by the oxidoreductase OpS7. The latter is further dimerized to oosporein by the catalase OpS5. OpS6 probably functions en route for protecting cells against oxidative stress by scavenging any leaked free radical form of benzenetetrol by activating the thiol group of glutathione. In Beauveria bassiana (strain ARSEF 2860) (White muscardine disease fungus), this protein is Oxidoreductase OpS7.